The primary structure comprises 416 residues: Elongation factor 1-gamma 3 (416 aa).

Positions 1–82 (MALVLHCGSG…YVARLKDNSS (82 aa)) constitute a GST N-terminal domain. In terms of domain architecture, GST C-terminal spans 87–215 (SLIDYSHIEQ…FKQAESVPPV (129 aa)). Residues 213 to 263 (PPVQKKAAPPKESKAKEAKKEAPKEAPKPKVEASEEEEAPKPKPKNPLDLL) are disordered. Residues 221-245 (PPKESKAKEAKKEAPKEAPKPKVEA) are compositionally biased toward basic and acidic residues. Residues 256–416 (PKNPLDLLPP…EDLLDAKCFK (161 aa)) enclose the EF-1-gamma C-terminal domain.

In terms of assembly, EF-1 is composed of four subunits: alpha, beta, delta, and gamma.

Its function is as follows. Probably plays a role in anchoring the complex to other cellular components. This chain is Elongation factor 1-gamma 3, found in Oryza sativa subsp. japonica (Rice).